The following is a 301-amino-acid chain: Outer membrane porin G (301 aa).

A signal peptide spans 1-21 (MKKLLPCTALVMCAGMACAQA). 16 consecutive transmembrane segments (beta stranded) span residues 27–35 (WHFNIGAMY), 47–57 (MDGLAEPSVYF), 64–72 (WRIALAYYQ), 89–98 (RPELEVHYQF), 104–112 (FSFGLTGGF), 129–136 (NMQRWKIA), 149–158 (FNGWLSMYKF), 172–182 (VETETGLQYTF), 186–195 (VALRVNYYLE), 201–209 (DDSRNNGEF), 213–222 (EIRAYLPLTL), 230–238 (YTRIGLDRW), 240–248 (NWDWQDDIE), 254–265 (FNRVGLFYGYDF), 269–279 (LSVSLEYAFEW), and 289–300 (KFHYAGVGVNYS).

As to quaternary structure, monomer.

The protein resides in the cell outer membrane. Its function is as follows. Forms channels functionally larger than those of classical porins. Functionally, may act as a regulator of the RCS-phosphorelay signal transduction pathway. The polypeptide is Outer membrane porin G (ompG) (Escherichia coli (strain K12)).